Consider the following 730-residue polypeptide: Ribosomal RNA large subunit methyltransferase K/L (730 aa).

The region spanning 46-157 (TAYRLCLWSR…RGEAILSLDL (112 aa)) is the THUMP domain.

It belongs to the methyltransferase superfamily. RlmKL family.

The protein resides in the cytoplasm. It catalyses the reaction guanosine(2445) in 23S rRNA + S-adenosyl-L-methionine = N(2)-methylguanosine(2445) in 23S rRNA + S-adenosyl-L-homocysteine + H(+). The enzyme catalyses guanosine(2069) in 23S rRNA + S-adenosyl-L-methionine = N(2)-methylguanosine(2069) in 23S rRNA + S-adenosyl-L-homocysteine + H(+). In terms of biological role, specifically methylates the guanine in position 2445 (m2G2445) and the guanine in position 2069 (m7G2069) of 23S rRNA. The polypeptide is Ribosomal RNA large subunit methyltransferase K/L (Pseudomonas putida (strain W619)).